The following is a 101-amino-acid chain: Urease subunit beta (101 aa).

It belongs to the urease beta subunit family. Heterotrimer of UreA (gamma), UreB (beta) and UreC (alpha) subunits. Three heterotrimers associate to form the active enzyme.

It is found in the cytoplasm. It carries out the reaction urea + 2 H2O + H(+) = hydrogencarbonate + 2 NH4(+). The protein operates within nitrogen metabolism; urea degradation; CO(2) and NH(3) from urea (urease route): step 1/1. The sequence is that of Urease subunit beta from Acaryochloris marina (strain MBIC 11017).